Here is a 391-residue protein sequence, read N- to C-terminus: Homocysteine-responsive endoplasmic reticulum-resident ubiquitin-like domain member 1 protein (391 aa).

An N-acetylmethionine modification is found at Met-1. Residues 1–263 (MESETEPEPV…VEEDDEINRD (263 aa)) are Cytoplasmic-facing. The Ubiquitin-like domain occupies 10-72 (VTLLVKSPNQ…LLDHQCLRDL (63 aa)). Residues 100 to 126 (KVAESTEEPAGSNRGQYPEDSSSDGLR) are disordered. Over residues 112 to 124 (NRGQYPEDSSSDG) the composition is skewed to polar residues. Positions 115–200 (QYPEDSSSDG…ASGAFVPPPS (86 aa)) are interaction with UBQLN1. Ser-135 carries the post-translational modification Phosphoserine. Residues 264–284 (WLDWTYSAATFSVFLSILYFY) form a helical membrane-spanning segment. Residues 285-289 (SSLSR) are Lumenal-facing. Residues 290-310 (FLMVMGATVVMYLHHVGWFPF) traverse the membrane as a helical segment. Topologically, residues 311 to 391 (RPRPVQNFPN…LPEGPPAIAN (81 aa)) are cytoplasmic. Residues 318-359 (FPNDGPPPDIVNQDPNNNLQEGTDPETEDPNHVPPDRGVLDG) form a disordered region. The span at 346–357 (DPNHVPPDRGVL) shows a compositional bias: basic and acidic residues.

In terms of assembly, interacts with PSEN1 and PSEN2. Interacts with UBXN6. Interacts with UBQLN1, UBQLN2 and UBQLN4. Component of the HRD1 complex, which comprises at least SYNV1/HRD1, FAM8A1, HERPUD1/HERP, OS9, SEL1L and UBE2J1. FAM8A1 binding to SYNV1 may promote recruitment of HERPUD1 to the HRD1 complex.

It is found in the endoplasmic reticulum membrane. Component of the endoplasmic reticulum quality control (ERQC) system also called ER-associated degradation (ERAD) involved in ubiquitin-dependent degradation of misfolded endoplasmic reticulum proteins. Binds to ubiquilins and this interaction is required for efficient degradation of CD3D via the ERAD pathway. This is Homocysteine-responsive endoplasmic reticulum-resident ubiquitin-like domain member 1 protein (HERPUD1) from Pongo abelii (Sumatran orangutan).